Consider the following 365-residue polypeptide: Alanine racemase (365 aa).

Lys-32 acts as the Proton acceptor; specific for D-alanine in catalysis. Lys-32 carries the post-translational modification N6-(pyridoxal phosphate)lysine. Residue Arg-128 coordinates substrate. Residue Tyr-257 is the Proton acceptor; specific for L-alanine of the active site. Residue Met-305 coordinates substrate.

Belongs to the alanine racemase family. Pyridoxal 5'-phosphate serves as cofactor.

It catalyses the reaction L-alanine = D-alanine. The protein operates within amino-acid biosynthesis; D-alanine biosynthesis; D-alanine from L-alanine: step 1/1. Catalyzes the interconversion of L-alanine and D-alanine. May also act on other amino acids. In Francisella tularensis subsp. tularensis (strain SCHU S4 / Schu 4), this protein is Alanine racemase (alr).